A 99-amino-acid polypeptide reads, in one-letter code: Keratinocyte differentiation-associated protein (99 aa).

An N-terminal signal peptide occupies residues 1 to 22; it reads MKIPVLPAVVLLSLLALHSAQG.

In terms of tissue distribution, highly expressed in skin, but not detectable in any other tissue examined. Expression restricted to cornified/stratified epithelia and not detected in non-cornified/stratified epithelia.

It localises to the secreted. May act as a soluble regulator of keratinocyte differentiation. May play an important role in embryonic skin morphogenesis. This chain is Keratinocyte differentiation-associated protein, found in Canis lupus familiaris (Dog).